The primary structure comprises 447 residues: Phosphoglucosamine mutase (447 aa).

Serine 100 (phosphoserine intermediate) is an active-site residue. Residues serine 100, aspartate 239, aspartate 241, and aspartate 243 each coordinate Mg(2+). At serine 100 the chain carries Phosphoserine.

It belongs to the phosphohexose mutase family. The cofactor is Mg(2+). Activated by phosphorylation.

The enzyme catalyses alpha-D-glucosamine 1-phosphate = D-glucosamine 6-phosphate. Functionally, catalyzes the conversion of glucosamine-6-phosphate to glucosamine-1-phosphate. The chain is Phosphoglucosamine mutase from Caldanaerobacter subterraneus subsp. tengcongensis (strain DSM 15242 / JCM 11007 / NBRC 100824 / MB4) (Thermoanaerobacter tengcongensis).